A 543-amino-acid polypeptide reads, in one-letter code: Chaperonin GroEL (543 aa).

ATP contacts are provided by residues 29-32 (TLGP), Lys-50, 86-90 (DGTTT), Gly-415, and Asp-495.

Belongs to the chaperonin (HSP60) family. As to quaternary structure, forms a cylinder of 14 subunits composed of two heptameric rings stacked back-to-back. Interacts with the co-chaperonin GroES.

Its subcellular location is the cytoplasm. It catalyses the reaction ATP + H2O + a folded polypeptide = ADP + phosphate + an unfolded polypeptide.. Functionally, together with its co-chaperonin GroES, plays an essential role in assisting protein folding. The GroEL-GroES system forms a nano-cage that allows encapsulation of the non-native substrate proteins and provides a physical environment optimized to promote and accelerate protein folding. The sequence is that of Chaperonin GroEL from Karelsulcia muelleri (strain GWSS) (Sulcia muelleri).